Reading from the N-terminus, the 901-residue chain is Aconitate hydratase A (901 aa).

The [4Fe-4S] cluster site is built by C443, C509, and C512.

It belongs to the aconitase/IPM isomerase family. As to quaternary structure, monomer. Requires [4Fe-4S] cluster as cofactor.

The catalysed reaction is citrate = D-threo-isocitrate. It catalyses the reaction (2S,3R)-3-hydroxybutane-1,2,3-tricarboxylate = 2-methyl-cis-aconitate + H2O. It participates in carbohydrate metabolism; tricarboxylic acid cycle; isocitrate from oxaloacetate: step 2/2. It functions in the pathway organic acid metabolism; propanoate degradation. Involved in the catabolism of short chain fatty acids (SCFA) via the tricarboxylic acid (TCA)(acetyl degradation route) and probably the 2-methylcitrate cycle I (propionate degradation route). Catalyzes the reversible isomerization of citrate to isocitrate via cis-aconitate. Could catalyze the hydration of 2-methyl-cis-aconitate to yield (2R,3S)-2-methylisocitrate. The apo form of AcnA functions as a RNA-binding regulatory protein. This Staphylococcus aureus (strain COL) protein is Aconitate hydratase A (acnA).